The sequence spans 113 residues: Iron-sulfur cluster insertion protein ErpA (113 aa).

3 residues coordinate iron-sulfur cluster: Cys41, Cys105, and Cys107.

Belongs to the HesB/IscA family. In terms of assembly, homodimer. It depends on iron-sulfur cluster as a cofactor.

Required for insertion of 4Fe-4S clusters for at least IspG. In Vibrio vulnificus (strain CMCP6), this protein is Iron-sulfur cluster insertion protein ErpA.